Here is a 490-residue protein sequence, read N- to C-terminus: Ribosome biogenesis protein YTM1 (490 aa).

The interval 1–22 (MDGLEDGPLDASTATSQKPQRQ) is disordered. A ubiquitin-like (UBL) domain region spans residues 23–104 (VRLKLTSRHE…ETTLDVEYVR (82 aa)). WD repeat units follow at residues 116–168 (LHDD…IALS), 175–213 (GHTA…DGFS), 224–263 (GHKG…NPAA), 298–338 (SHTA…LVDT), 340–379 (TASH…TTVS), 385–425 (GHTN…TDKD), and 449–487 (GEGV…PNGG). The interval 255-286 (TRKSENPAAPESLLPSNTSRSSKRRKLNSSVS) is disordered.

Belongs to the WD repeat WDR12/YTM1 family. As to quaternary structure, component of the NOP7 complex, composed of ERB1, NOP7 and YTM1. The complex is held together by ERB1, which interacts with NOP7 via its N-terminal domain and with YTM1 via a high-affinity interaction between the seven-bladed beta-propeller domains of the 2 proteins. The NOP7 complex associates with the 66S pre-ribosome. Interacts (via UBL domain) with MDN1 (via VWFA/MIDAS domain).

The protein localises to the nucleus. It is found in the nucleolus. It localises to the nucleoplasm. In terms of biological role, component of the NOP7 complex, which is required for maturation of the 25S and 5.8S ribosomal RNAs and formation of the 60S ribosome. The polypeptide is Ribosome biogenesis protein YTM1 (Ajellomyces capsulatus (strain NAm1 / WU24) (Darling's disease fungus)).